The following is a 189-amino-acid chain: GMP synthase [glutamine-hydrolyzing] subunit A (189 aa).

Residues 3-187 (RIDVIDNHGQ…LSVCDQQSVA (185 aa)) form the Glutamine amidotransferase type-1 domain. C73 (nucleophile) is an active-site residue. Catalysis depends on residues H161 and E163.

As to quaternary structure, heterodimer composed of a glutamine amidotransferase subunit (A) and a GMP-binding subunit (B).

The enzyme catalyses XMP + L-glutamine + ATP + H2O = GMP + L-glutamate + AMP + diphosphate + 2 H(+). Its pathway is purine metabolism; GMP biosynthesis; GMP from XMP (L-Gln route): step 1/1. Its function is as follows. Catalyzes the synthesis of GMP from XMP. The polypeptide is GMP synthase [glutamine-hydrolyzing] subunit A (Haloarcula marismortui (strain ATCC 43049 / DSM 3752 / JCM 8966 / VKM B-1809) (Halobacterium marismortui)).